A 393-amino-acid chain; its full sequence is MPKKKPTPIQLNPAPDGSAVNGTSSAETNLEALQKKLEELELDEQQRKRLEAFLTQKQKVGELKDDDFEKISELGAGNGGVVFKVSHKPSGLVMARKLIHLEIKPAIRNQIIRELQVLHECNSPYIVGFYGAFYSDGEISICMEHMDGGSLDQVLKKAGRIPEQILGKVSIAVIKGLTYLREKHKIMHRDVQPSNILVNSRGEIKLCDFGVSGQLIDSMANSFVGTRSYMSPERFQGTHYSVQSDIWSMGLSPVEMAVGRYPIPSPDAKELELMFGCQVEGDAAETPPRPRTPGRPLSSYGMDSRPPMAIFELLDYIVNEPPPKLPSGVFSLEFQDFVNKCLIKNPAERADLKQLMVHAFIKRSDAEEVDFAGWLCSTIGLNQPSTPTHAAGV.

The disordered stretch occupies residues 1-27 (MPKKKPTPIQLNPAPDGSAVNGTSSAE). The Protein kinase domain occupies 68 to 361 (FEKISELGAG…LKQLMVHAFI (294 aa)). ATP is bound by residues 74–82 (LGAGNGGVV) and Lys97. The active-site Proton acceptor is Asp190. Residues Ser218 and Ser222 each carry the phosphoserine; by RAF modification. Residues 270 to 307 (ELELMFGCQVEGDAAETPPRPRTPGRPLSSYGMDSRPP) form an RAF1-binding region. Thr286 carries the phosphothreonine modification. A Phosphothreonine; by MAPK1 modification is found at Thr292. Phosphoserine; by PAK is present on Ser298.

The protein belongs to the protein kinase superfamily. STE Ser/Thr protein kinase family. MAP kinase kinase subfamily. As to quaternary structure, found in a complex with at least BRAF, HRAS, MAP2K1, MAPK3/ERK1 and RGS14. Forms a heterodimer with MAP2K2/MEK2. Forms heterodimers with KSR2 which further dimerize to form tetramers. Interacts with KSR1 or KSR2 and BRAF; the interaction with KSR1 or KSR2 mediates KSR1-BRAF or KSR2-BRAF dimerization. Interacts with ARBB2, LAMTOR3, MAPK1/ERK2 and RAF1. Interacts with MAPK1/ERK2. Interacts with MORG1. Interacts with PPARG. Interacts with isoform 1 of VRK2. Interacts with SGK1. Interacts with BIRC6/bruce. Interacts with KAT7; the interaction promotes KAT7 phosphorylation. Interacts with RAF1 and NEK10; the interaction is required for ERK1/2-signaling pathway activation in response to UV irradiation. Interacts with TRAF3IP3. Interacts with MOS. Post-translationally, phosphorylation at Ser-218 and Ser-222 by MAP kinase kinase kinases (BRAF or MEKK1) positively regulates the kinase activity. Also phosphorylated at Thr-292 by MAPK1/ERK2 and at Ser-298 by PAK. MAPK1/ERK2 phosphorylation of Thr-292 occurs in response to cellular adhesion and leads to inhibition of Ser-298 phosphorylation by PAK. Autophosphorylated at Ser-218 and Ser-222, autophosphosphorylation is promoted by NEK10 following UV irradiation.

The protein localises to the cytoplasm. The protein resides in the cytoskeleton. Its subcellular location is the microtubule organizing center. It is found in the centrosome. It localises to the spindle pole body. The protein localises to the nucleus. The protein resides in the membrane. The enzyme catalyses L-seryl-[protein] + ATP = O-phospho-L-seryl-[protein] + ADP + H(+). It carries out the reaction L-threonyl-[protein] + ATP = O-phospho-L-threonyl-[protein] + ADP + H(+). The catalysed reaction is L-tyrosyl-[protein] + ATP = O-phospho-L-tyrosyl-[protein] + ADP + H(+). Its activity is regulated as follows. Ras proteins such as HRAS mediate the activation of RAF proteins such as RAF1 or BRAF which in turn activate extracellular signal-regulated kinases (ERK) through MAPK (mitogen-activated protein kinases) and ERK kinases MAP2K1/MEK1 and MAP2K2/MEK2. Activation occurs through phosphorylation of Ser-218 and Ser-222. MAP2K1/MEK1 binds KSR1 or KSR2 releasing the inhibitory intramolecular interaction between KSR1 or KSR2 protein kinase and N-terminal domains. This allows KSR1 or KSR2 dimerization with BRAF leading to BRAF activation and phosphorylation of MAP2K1. MAP2K1/MEK1 is also the target of negative feed-back regulation by its substrate kinases, such as MAPK1/ERK2. These phosphorylate MAP2K1/MEK1 on Thr-292, thereby facilitating dephosphorylation of the activating residues Ser-218 and Ser-222. Inhibited by serine/threonine phosphatase 2A. Dual specificity protein kinase which acts as an essential component of the MAP kinase signal transduction pathway. Binding of extracellular ligands such as growth factors, cytokines and hormones to their cell-surface receptors activates RAS and this initiates RAF1 activation. RAF1 then further activates the dual-specificity protein kinases MAP2K1/MEK1 and MAP2K2/MEK2. Both MAP2K1/MEK1 and MAP2K2/MEK2 function specifically in the MAPK/ERK cascade, and catalyze the concomitant phosphorylation of a threonine and a tyrosine residue in a Thr-Glu-Tyr sequence located in the extracellular signal-regulated kinases MAPK3/ERK1 and MAPK1/ERK2, leading to their activation and further transduction of the signal within the MAPK/ERK cascade. Activates BRAF in a KSR1 or KSR2-dependent manner; by binding to KSR1 or KSR2 releases the inhibitory intramolecular interaction between KSR1 or KSR2 protein kinase and N-terminal domains which promotes KSR1 or KSR2-BRAF dimerization and BRAF activation. Depending on the cellular context, this pathway mediates diverse biological functions such as cell growth, adhesion, survival and differentiation, predominantly through the regulation of transcription, metabolism and cytoskeletal rearrangements. One target of the MAPK/ERK cascade is peroxisome proliferator-activated receptor gamma (PPARG), a nuclear receptor that promotes differentiation and apoptosis. MAP2K1/MEK1 has been shown to export PPARG from the nucleus. The MAPK/ERK cascade is also involved in the regulation of endosomal dynamics, including lysosome processing and endosome cycling through the perinuclear recycling compartment (PNRC), as well as in the fragmentation of the Golgi apparatus during mitosis. This is Dual specificity mitogen-activated protein kinase kinase 1 (MAP2K1) from Pan troglodytes (Chimpanzee).